The primary structure comprises 481 residues: F-box protein At1g49360 (481 aa).

In terms of domain architecture, F-box spans 105–156; it reads LKEDLFLPSDLVRLILSRLSFKDNIRSSTVCKAWGDIAASVRVKSRRCWLLY.

The polypeptide is F-box protein At1g49360 (Arabidopsis thaliana (Mouse-ear cress)).